A 500-amino-acid polypeptide reads, in one-letter code: Probable malate:quinone oxidoreductase (500 aa).

The protein belongs to the MQO family. The cofactor is FAD.

It carries out the reaction (S)-malate + a quinone = a quinol + oxaloacetate. The protein operates within carbohydrate metabolism; tricarboxylic acid cycle; oxaloacetate from (S)-malate (quinone route): step 1/1. This chain is Probable malate:quinone oxidoreductase, found in Bacillus cereus (strain ZK / E33L).